The following is a 669-amino-acid chain: Cell surface receptor daf-1 (669 aa).

An N-terminal signal peptide occupies residues 1–19 (MRIRHVVFCLLALVYGAET). At 20–170 (SDDDLDERTN…APGPQQSSTW (151 aa)) the chain is on the extracellular side. Asn49, Asn79, Asn133, and Asn154 each carry an N-linked (GlcNAc...) asparagine glycan. A helical transmembrane segment spans residues 171-191 (LILTILALLTFIVLLGIAIFL). The Cytoplasmic segment spans residues 192-669 (TRKSWEAKFD…NDDSSRPLLG (478 aa)). The GS domain maps to 262–292 (NNMKDMLDVLEETSGSGMGPTTLHKLTIGGQ). In terms of domain architecture, Protein kinase spans 293–593 (IRLTGRVGSG…KRMDERQQLL (301 aa)). ATP contacts are provided by residues 299–307 (VGSGRFGNV) and Lys320. Residue Asp423 is the Proton acceptor of the active site. Basic and acidic residues-rich tracts occupy residues 611–624 (DRKILGPQKPKDES) and 633–650 (VQKEIDREDEQENWRETA). The disordered stretch occupies residues 611-669 (DRKILGPQKPKDESPANGAPRIVQKEIDREDEQENWRETAKTPNGHISSNDDSSRPLLG). Positions 651 to 661 (KTPNGHISSND) are enriched in polar residues.

This sequence belongs to the protein kinase superfamily. TKL Ser/Thr protein kinase family. TGFB receptor subfamily. In terms of assembly, may interact with daf-4 to regulate dauer larva development. Head and ventral nerve cord from embryos to adults. Expressed in many sensory neurons. Subset of head neurons show coexpression with daf-4 when dauer/nondauer decision is made. Also expressed in non-neuronal cells: membraneous sheath surrounding the distal end of the intestine and in the distal tip cell of the gonad.

It is found in the membrane. It carries out the reaction L-threonyl-[receptor-protein] + ATP = O-phospho-L-threonyl-[receptor-protein] + ADP + H(+). The catalysed reaction is L-seryl-[receptor-protein] + ATP = O-phospho-L-seryl-[receptor-protein] + ADP + H(+). Probably involved in a TGF-beta pathway. May be a receptor for TGF-beta-like ligand daf-7. Controls the decision of whether or not larvae enter a developmentally arrested state, known as dauer, in response to environmental conditions. Involved in regulating entry into quiescence triggered by satiety. Involved in sensitivity to CO2 levels. In AWC neurons, acts to promote expression of srsx-3, a member of the GPCR family. The chain is Cell surface receptor daf-1 (daf-1) from Caenorhabditis elegans.